Reading from the N-terminus, the 378-residue chain is Succinyl-diaminopimelate desuccinylase 2 (378 aa).

His-68 is a Zn(2+) binding site. Asp-70 is a catalytic residue. Asp-101 is a binding site for Zn(2+). The active-site Proton acceptor is the Glu-135. Positions 136, 164, and 350 each coordinate Zn(2+).

This sequence belongs to the peptidase M20A family. DapE subfamily. In terms of assembly, homodimer. Zn(2+) serves as cofactor. It depends on Co(2+) as a cofactor.

The catalysed reaction is N-succinyl-(2S,6S)-2,6-diaminopimelate + H2O = (2S,6S)-2,6-diaminopimelate + succinate. Its pathway is amino-acid biosynthesis; L-lysine biosynthesis via DAP pathway; LL-2,6-diaminopimelate from (S)-tetrahydrodipicolinate (succinylase route): step 3/3. Its function is as follows. Catalyzes the hydrolysis of N-succinyl-L,L-diaminopimelic acid (SDAP), forming succinate and LL-2,6-diaminopimelate (DAP), an intermediate involved in the bacterial biosynthesis of lysine and meso-diaminopimelic acid, an essential component of bacterial cell walls. The sequence is that of Succinyl-diaminopimelate desuccinylase 2 from Alteromonas mediterranea (strain DSM 17117 / CIP 110805 / LMG 28347 / Deep ecotype).